Here is a 189-residue protein sequence, read N- to C-terminus: Blue copper protein (189 aa).

Positions 1–24 are cleaved as a signal peptide; it reads MAFSNALVLCFLLAIINMALPSLA. One can recognise a Phytocyanin domain in the interval 25–124; it reads TVYTVGDTSG…GMKLSIKVKA (100 aa). Cu cation contacts are provided by H65, C106, and H111. A disulfide bond links C78 and C106. Low complexity predominate over residues 127-160; it reads GSSAAPSATPSSSGKGSPSSDDTPAATTTTTTPT. A disordered region spans residues 127-165; that stretch reads GSSAAPSATPSSSGKGSPSSDDTPAATTTTTTPTKQNES. N163 carries N-linked (GlcNAc...) asparagine glycosylation.

The chain is Blue copper protein from Pisum sativum (Garden pea).